A 500-amino-acid chain; its full sequence is Anthranilate synthase component 1 (500 aa).

L-tryptophan contacts are provided by residues Ser-49 and 276–278 (PFM). 311 to 312 (GT) is a binding site for chorismate. Glu-338 contributes to the Mg(2+) binding site. Chorismate-binding positions include Tyr-426, Arg-446, 460–462 (GGG), and Gly-462. Glu-475 provides a ligand contact to Mg(2+).

It belongs to the anthranilate synthase component I family. As to quaternary structure, heterotetramer consisting of two non-identical subunits: a beta subunit (TrpG) and a large alpha subunit (TrpE). Mg(2+) is required as a cofactor.

It catalyses the reaction chorismate + L-glutamine = anthranilate + pyruvate + L-glutamate + H(+). It functions in the pathway amino-acid biosynthesis; L-tryptophan biosynthesis; L-tryptophan from chorismate: step 1/5. With respect to regulation, feedback inhibited by tryptophan. Its function is as follows. Part of a heterotetrameric complex that catalyzes the two-step biosynthesis of anthranilate, an intermediate in the biosynthesis of L-tryptophan. In the first step, the glutamine-binding beta subunit (TrpG) of anthranilate synthase (AS) provides the glutamine amidotransferase activity which generates ammonia as a substrate that, along with chorismate, is used in the second step, catalyzed by the large alpha subunit of AS (TrpE) to produce anthranilate. In the absence of TrpG, TrpE can synthesize anthranilate directly from chorismate and high concentrations of ammonia. In Cereibacter sphaeroides (strain ATCC 17023 / DSM 158 / JCM 6121 / CCUG 31486 / LMG 2827 / NBRC 12203 / NCIMB 8253 / ATH 2.4.1.) (Rhodobacter sphaeroides), this protein is Anthranilate synthase component 1 (trpE).